We begin with the raw amino-acid sequence, 276 residues long: Type 2 phosphatidylinositol 4,5-bisphosphate 4-phosphatase (276 aa).

Residues 1–10 (MAADGIDERS) are compositionally biased toward basic and acidic residues. The disordered stretch occupies residues 1-27 (MAADGIDERSPLISPSSGNVTPTAPPY). A compositionally biased stretch (polar residues) spans 13–27 (ISPSSGNVTPTAPPY). Cys106 is an active-site residue. The CX5R motif signature appears at 106 to 112 (CKDISRR). 2 helical membrane passes run 211-231 (CCTYITMGMICIFIGVGLTVG) and 246-266 (WAVAYLVGLVCLIRACYWGAI).

The protein resides in the late endosome membrane. The protein localises to the lysosome membrane. The catalysed reaction is a 1,2-diacyl-sn-glycero-3-phospho-(1D-myo-inositol-4,5-bisphosphate) + H2O = a 1,2-diacyl-sn-glycero-3-phospho-(1D-myo-inositol-5-phosphate) + phosphate. Its function is as follows. Catalyzes the hydrolysis of phosphatidylinositol-4,5-bisphosphate (PtdIns-4,5-P2) to phosphatidylinositol-4-phosphate (PtdIns-4-P). This chain is Type 2 phosphatidylinositol 4,5-bisphosphate 4-phosphatase (pip4p2), found in Xenopus tropicalis (Western clawed frog).